Here is a 308-residue protein sequence, read N- to C-terminus: UDP-N-acetylenolpyruvoylglucosamine reductase (308 aa).

The FAD-binding PCMH-type domain occupies 30 to 213 (RVGGAAEWFI…KATTQSHLDH (184 aa)). The active site involves R176. S227 (proton donor) is an active-site residue. E297 is a catalytic residue.

It belongs to the MurB family. The cofactor is FAD.

Its subcellular location is the cytoplasm. The enzyme catalyses UDP-N-acetyl-alpha-D-muramate + NADP(+) = UDP-N-acetyl-3-O-(1-carboxyvinyl)-alpha-D-glucosamine + NADPH + H(+). The protein operates within cell wall biogenesis; peptidoglycan biosynthesis. In terms of biological role, cell wall formation. The chain is UDP-N-acetylenolpyruvoylglucosamine reductase from Acaryochloris marina (strain MBIC 11017).